The sequence spans 324 residues: UDP-N-acetylenolpyruvoylglucosamine reductase (324 aa).

Residues 36-203 enclose the FAD-binding PCMH-type domain; it reads FRAGGLAELM…TSVLFEGYPE (168 aa). Arg-183 is a catalytic residue. Ser-232 serves as the catalytic Proton donor. Residue Glu-302 is part of the active site.

The protein belongs to the MurB family. FAD serves as cofactor.

The protein localises to the cytoplasm. It carries out the reaction UDP-N-acetyl-alpha-D-muramate + NADP(+) = UDP-N-acetyl-3-O-(1-carboxyvinyl)-alpha-D-glucosamine + NADPH + H(+). The protein operates within cell wall biogenesis; peptidoglycan biosynthesis. Functionally, cell wall formation. This Rhizobium johnstonii (strain DSM 114642 / LMG 32736 / 3841) (Rhizobium leguminosarum bv. viciae) protein is UDP-N-acetylenolpyruvoylglucosamine reductase.